The sequence spans 133 residues: Ribosome-binding factor A (133 aa).

This sequence belongs to the RbfA family. As to quaternary structure, monomer. Binds 30S ribosomal subunits, but not 50S ribosomal subunits or 70S ribosomes.

The protein resides in the cytoplasm. One of several proteins that assist in the late maturation steps of the functional core of the 30S ribosomal subunit. Associates with free 30S ribosomal subunits (but not with 30S subunits that are part of 70S ribosomes or polysomes). Required for efficient processing of 16S rRNA. May interact with the 5'-terminal helix region of 16S rRNA. The chain is Ribosome-binding factor A from Bordetella pertussis (strain Tohama I / ATCC BAA-589 / NCTC 13251).